A 1116-amino-acid chain; its full sequence is MESPLIYVSVLLLNIFEFSSGIVYNKDDTEKRFACSNKGFPQENEIIKLYLFLENLKIQCFFQTENEIASKAMLSVFTSGGLAPSLGIMNSTYNGIFHFNLTLFSDRILWLVDIPRENITQSTDIAAVEEWLVRITLHHGLNIYATEGTLLDVIREPILQWTPGDVIPESEISKLYPHVVDLKVTKCPCANDVALLGFIVDTIVDGVYIGITFGGFWHDYDTTWFNMTQTIYSQLQEEYEDLSLVDMVLTNHFLVILTSLGLFVSEDLRYPSRHSLSFSRADFCGFERVDYVKGKLWYNERCFANREHFEVDYVTVTFERNRTLSESSSCFYSQEPFLEWVPCLPHIFKGIKIFPTVLTFLVDQERGTGVYLFYNKVRKTAIASVSTLRNNEPNSQSKFPIFRFPSSFSSPVGMVFHPRSHFLYAYGNQIWLSVDGGNTFQLIANFHDDIIKKTFHSFYTSAITFVSQRGKVYSTKAGMGRYSAVGSVTERIFTLYYDHLGFLHKLTLGRFEASGPPTAFGNSRNLFGQPPDMGFETALAPQHTSLDEIIFFAYVPENEPQETIYSKKFGNIHYGKVIHSGKTGRAYIRKVLQHTTPKGFLSSVIAEMKEPFGLEEVNESSCLSSSLLINKAGNVYKLTLDSQVVQALFEDTDIEKTVVLPGYSSFLITSILDNKNALAIATMPESAPNNMTFLKSTWFLYNFGQRNGRTWKIYSKPCNYWFQHDDSPSLNIVKYIDLGNSYVLKAKVIRNAKGFRMLEIPLLTVFVGNPNLLEVTAEVTFDDTDSYVITISAASKVLHQGSTSLAFIMWSASTECFVTTMVPTLKSSCSYLRSMHHIPSKFIPFEDWISGVHKDSQGFNLIKTLPINYRPPSNMGIAIPLTDNFYHADPSKPIPRNMFHMSKKTGKFKQCANVSTREECNCTKDQKFSHAVAFSDCREKVPRFKFPITQYPVSLEIINEDGRVPLQSPYLVTVTEVNMRHNWKLKHTVPENIKRMKQLVEPILGAAVYNPSGLNLSIKGSELFHFRVTVISGVTFCNLIEEFQIYVDEAPLPFPGHTLIAVATAVVLGGLIFIAFMFQLQGIHPWRTFQRWIRRNQEKFSSISLSELIHRSKSEE.

The Extracellular portion of the chain corresponds to 1–1053 (MESPLIYVSV…QIYVDEAPLP (1053 aa)). Cys35 and Cys60 are oxidised to a cystine. 5 N-linked (GlcNAc...) asparagine glycosylation sites follow: Asn90, Asn100, Asn118, Asn226, and Asn321. Cys189 and Cys302 are disulfide-bonded. A disulfide bond links Cys330 and Cys343. Residues Asn618 and Asn690 are each glycosylated (N-linked (GlcNAc...) asparagine). Disulfide bonds link Cys718–Cys816, Cys829–Cys1037, Cys911–Cys920, and Cys922–Cys937. Residues Asn913 and Asn921 are each glycosylated (N-linked (GlcNAc...) asparagine). 2 N-linked (GlcNAc...) asparagine glycosylation sites follow: Asn1010 and Asn1015. The chain crosses the membrane as a helical span at residues 1054–1076 (FPGHTLIAVATAVVLGGLIFIAF). Residues 1077–1116 (MFQLQGIHPWRTFQRWIRRNQEKFSSISLSELIHRSKSEE) lie on the Cytoplasmic side of the membrane.

Component of the CatSper complex or CatSpermasome composed of the core pore-forming members CATSPER1, CATSPER2, CATSPER3 and CATSPER4 as well as auxiliary members CATSPERB, CATSPERG, CATSPERD, CATSPERE, CATSPERZ, C2CD6/CATSPERT, TMEM249, TMEM262 and EFCAB9. HSPA1 may be an additional auxiliary complex member. The core complex members CATSPER1, CATSPER2, CATSPER3 and CATSPER4 form a heterotetrameric channel. The auxiliary CATSPERB, CATSPERG, CATSPERD and CATSPERE subunits form a pavilion-like structure over the pore which stabilizes the complex through interactions with CATSPER4, CATSPER3, CATSPER1 and CATSPER2 respectively. TMEM262/CATSPERH interacts with CATSPERB, further stabilizing the complex. C2CD6/CATSPERT interacts at least with CATSPERD and is required for targeting the CatSper complex in the flagellar membrane.

It localises to the cell projection. It is found in the cilium. The protein localises to the flagellum membrane. In terms of biological role, auxiliary component of the CatSper complex, a complex involved in sperm cell hyperactivation. Sperm cell hyperactivation is needed for sperm motility which is essential late in the preparation of sperm for fertilization. The polypeptide is Cation channel sperm-associated auxiliary subunit beta (Homo sapiens (Human)).